The sequence spans 89 residues: Small ribosomal subunit protein uS15 (89 aa).

This sequence belongs to the universal ribosomal protein uS15 family. In terms of assembly, part of the 30S ribosomal subunit. Forms a bridge to the 50S subunit in the 70S ribosome, contacting the 23S rRNA.

One of the primary rRNA binding proteins, it binds directly to 16S rRNA where it helps nucleate assembly of the platform of the 30S subunit by binding and bridging several RNA helices of the 16S rRNA. Functionally, forms an intersubunit bridge (bridge B4) with the 23S rRNA of the 50S subunit in the ribosome. The sequence is that of Small ribosomal subunit protein uS15 from Erwinia tasmaniensis (strain DSM 17950 / CFBP 7177 / CIP 109463 / NCPPB 4357 / Et1/99).